The primary structure comprises 127 residues: MSIPKDLRYSGEHEWVKVEGEKARIGITHFAQSELGDIVFVELPEVGAEIKADEPFGSVESVKTVSELYAPINGTVVEVNEDLDDSPEFVNESPYEKAWMIVVEPSDASEIEKLMTAEQYEEMTQED.

In terms of domain architecture, Lipoyl-binding spans 22 to 104; that stretch reads KARIGITHFA…YEKAWMIVVE (83 aa). Residue lysine 63 is modified to N6-lipoyllysine.

The protein belongs to the GcvH family. In terms of assembly, the glycine cleavage system is composed of four proteins: P, T, L and H. (R)-lipoate is required as a cofactor.

The glycine cleavage system catalyzes the degradation of glycine. The H protein shuttles the methylamine group of glycine from the P protein to the T protein. Functionally, is also involved in protein lipoylation via its role as an octanoyl/lipoyl carrier protein intermediate. This Bacillus subtilis (strain 168) protein is Glycine cleavage system H protein.